Consider the following 899-residue polypeptide: Suppressor of glycerol defect protein 1 (899 aa).

The span at 24–33 (QDERFSISEG) shows a compositional bias: basic and acidic residues. Disordered regions lie at residues 24 to 181 (QDER…VSYP) and 248 to 326 (ETNS…DDSE). Residues 34–49 (KKRRRGNGKHLSRKEK) show a composition bias toward basic residues. Residues 65 to 77 (REINSSRLKSAPT) are compositionally biased toward polar residues. Over residues 103–126 (DESESNENWDSDEVLTDEVAEESG) the composition is skewed to acidic residues. 3 stretches are compositionally biased toward basic and acidic residues: residues 134–143 (ETMKKLESLK), 162–174 (SYEKKHIRNRDTN), and 251–264 (SMRKDDEASEKAFS). Positions 265 to 292 (SDDDLSASDFEDSDGLSESDNDSVADSD) are enriched in acidic residues. In terms of domain architecture, MIF4G spans 335–540 (SKKVNSSLNK…DTMSDLKNNR (206 aa)). In terms of domain architecture, MI spans 644–781 (DIRRAIFISI…KLDVFKHVPF (138 aa)). Position 736 is a phosphoserine (Ser736).

Belongs to the CWC22 family. In terms of assembly, interacts with PLC1.

The protein resides in the nucleus. Its subcellular location is the nucleolus. Involved in osmoregulatory glycerol response, probably through its interaction with PLC1 which regulates the expression of GDP1. The protein is Suppressor of glycerol defect protein 1 (SGD1) of Saccharomyces cerevisiae (strain ATCC 204508 / S288c) (Baker's yeast).